A 460-amino-acid chain; its full sequence is MHPNDQTIFALASGRLPSALAIVRVSGARARDVLAALTGALPPPRTVRRVRIRDVNHELIDDAVVLWFAAPASATGEDVAEFHIHGGRAVLAALVKALASFDDVRPAEPGEFTRRAFENGKLDLTEAEGLDDLIHADTEAQRRLAVRQLGGLLGDRARRWRAQIIEALALIEAGIDFADEGDVQGELMAPALRTIATLHGEIAEVLAAQGKSERLRDGLVVAIAGPPNVGKSTLINRLARREVAIVSPHAGTTRDVIEVQLDLGGYPVTLIDTAGIRESEDSVEQEGVRRAKARAAEADLVLWLGADEAIDVAVEGSAPVWRVRNKIDLVPQADTVGADSGGAGLAANLWQTEGNVAAREAFGISAKRGDGVGDMVEALAGFAAQYFAASGEAAVISRERHRLLLQQAEVMLRCSMTVGLAPELVAEELRLAAGALGRLLGRVDVEDVLGEIFGRFCIGK.

The (6S)-5-formyl-5,6,7,8-tetrahydrofolate site is built by arginine 24, glutamate 81, and lysine 121. In terms of domain architecture, TrmE-type G spans 218 to 384 (GLVVAIAGPP…MVEALAGFAA (167 aa)). Residues 228–233 (NVGKST), 247–253 (SPHAGTT), and 272–275 (DTAG) contribute to the GTP site. Positions 232 and 253 each coordinate Mg(2+). Residue lysine 460 coordinates (6S)-5-formyl-5,6,7,8-tetrahydrofolate.

The protein belongs to the TRAFAC class TrmE-Era-EngA-EngB-Septin-like GTPase superfamily. TrmE GTPase family. In terms of assembly, homodimer. Heterotetramer of two MnmE and two MnmG subunits. Requires K(+) as cofactor.

It localises to the cytoplasm. Functionally, exhibits a very high intrinsic GTPase hydrolysis rate. Involved in the addition of a carboxymethylaminomethyl (cmnm) group at the wobble position (U34) of certain tRNAs, forming tRNA-cmnm(5)s(2)U34. The sequence is that of tRNA modification GTPase MnmE from Rhodopseudomonas palustris (strain HaA2).